The chain runs to 562 residues: Arf-GAP domain and FG repeat-containing protein 1 (562 aa).

An Arf-GAP domain is found at 11-135 (EKHLKMLRDM…WYVPPEQAKV (125 aa)). The C4-type zinc finger occupies 29 to 52 (CFDCDQRGPTYVNMTVGSFVCTSC). The residue at position 167 (Ser167) is a Phosphoserine. A disordered region spans residues 168–194 (APALHLNKGTPSQSPVVGRSQAQQQEK). Residues 176–191 (GTPSQSPVVGRSQAQQ) show a composition bias toward polar residues. Thr177 is subject to Phosphothreonine. Phosphoserine is present on residues Ser181 and Ser362. Ser367 is a glycosylation site (O-linked (GlcNAc) serine).

In terms of assembly, interacts with EPS15R and EPS15. Interacts with FCHO1. O-glycosylated.

The protein localises to the nucleus. It is found in the cytoplasmic vesicle. In terms of biological role, required for vesicle docking or fusion during acrosome biogenesis. May play a role in RNA trafficking or localization. The sequence is that of Arf-GAP domain and FG repeat-containing protein 1 (AGFG1) from Bos taurus (Bovine).